A 396-amino-acid polypeptide reads, in one-letter code: Small ribosomal subunit protein uS9m (396 aa).

Lys-287 is modified (N6-acetyllysine). Residues 374–396 (PRVRERKKPGQEGARRKFTWKKR) are disordered.

This sequence belongs to the universal ribosomal protein uS9 family. In terms of assembly, component of the mitochondrial small ribosomal subunit (mt-SSU). Mature mammalian 55S mitochondrial ribosomes consist of a small (28S) and a large (39S) subunit. The 28S small subunit contains a 12S ribosomal RNA (12S mt-rRNA) and 30 different proteins. The 39S large subunit contains a 16S rRNA (16S mt-rRNA), a copy of mitochondrial valine transfer RNA (mt-tRNA(Val)), which plays an integral structural role, and 52 different proteins.

It is found in the mitochondrion. The chain is Small ribosomal subunit protein uS9m (MRPS9) from Homo sapiens (Human).